The sequence spans 80 residues: Large ribosomal subunit protein bL31B (80 aa).

The protein belongs to the bacterial ribosomal protein bL31 family. Type B subfamily. Part of the 50S ribosomal subunit.

The sequence is that of Large ribosomal subunit protein bL31B from Stenotrophomonas maltophilia (strain K279a).